Consider the following 438-residue polypeptide: 23S rRNA (uracil(1939)-C(5))-methyltransferase RlmD (438 aa).

The TRAM domain maps to Lys10–Lys69. Residues Cys82, Cys88, Cys91, and Cys169 each contribute to the [4Fe-4S] cluster site. S-adenosyl-L-methionine-binding residues include Gln272, Phe301, Asn306, Glu322, Asn349, and Asp370. Cys396 functions as the Nucleophile in the catalytic mechanism.

It belongs to the class I-like SAM-binding methyltransferase superfamily. RNA M5U methyltransferase family. RlmD subfamily.

The enzyme catalyses uridine(1939) in 23S rRNA + S-adenosyl-L-methionine = 5-methyluridine(1939) in 23S rRNA + S-adenosyl-L-homocysteine + H(+). Functionally, catalyzes the formation of 5-methyl-uridine at position 1939 (m5U1939) in 23S rRNA. The protein is 23S rRNA (uracil(1939)-C(5))-methyltransferase RlmD of Aliivibrio fischeri (strain MJ11) (Vibrio fischeri).